A 130-amino-acid polypeptide reads, in one-letter code: Large ribosomal subunit protein bL12 (130 aa).

This sequence belongs to the bacterial ribosomal protein bL12 family. As to quaternary structure, homodimer. Part of the ribosomal stalk of the 50S ribosomal subunit. Forms a multimeric L10(L12)X complex, where L10 forms an elongated spine to which 2 to 4 L12 dimers bind in a sequential fashion. Binds GTP-bound translation factors.

Forms part of the ribosomal stalk which helps the ribosome interact with GTP-bound translation factors. Is thus essential for accurate translation. The polypeptide is Large ribosomal subunit protein bL12 (Synechococcus sp. (strain WH7803)).